Reading from the N-terminus, the 375-residue chain is Chaperone protein DnaJ (375 aa).

Residues 5–70 enclose the J domain; it reads DFYETLGVAK…QKRAAYDRYG (66 aa). The CR-type zinc finger occupies 136 to 214; it reads GKTAQIRVPT…CHGQGRVTEE (79 aa). 8 residues coordinate Zn(2+): cysteine 149, cysteine 152, cysteine 166, cysteine 169, cysteine 188, cysteine 191, cysteine 202, and cysteine 205. 4 CXXCXGXG motif repeats span residues 149–156, 166–173, 188–195, and 202–209; these read CDVCSGSG, CGTCQGTG, CPTCHGRG, and CPKCHGQG.

This sequence belongs to the DnaJ family. Homodimer. Zn(2+) serves as cofactor.

The protein localises to the cytoplasm. In terms of biological role, participates actively in the response to hyperosmotic and heat shock by preventing the aggregation of stress-denatured proteins and by disaggregating proteins, also in an autonomous, DnaK-independent fashion. Unfolded proteins bind initially to DnaJ; upon interaction with the DnaJ-bound protein, DnaK hydrolyzes its bound ATP, resulting in the formation of a stable complex. GrpE releases ADP from DnaK; ATP binding to DnaK triggers the release of the substrate protein, thus completing the reaction cycle. Several rounds of ATP-dependent interactions between DnaJ, DnaK and GrpE are required for fully efficient folding. Also involved, together with DnaK and GrpE, in the DNA replication of plasmids through activation of initiation proteins. This Rhizobium johnstonii (strain DSM 114642 / LMG 32736 / 3841) (Rhizobium leguminosarum bv. viciae) protein is Chaperone protein DnaJ.